The chain runs to 69 residues: Cold shock-like protein CspE (69 aa).

Positions 6 to 66 constitute a CSD domain; the sequence is GNVKWFNESK…GAKGPSAANV (61 aa).

It is found in the cytoplasm. The sequence is that of Cold shock-like protein CspE (cspE) from Buchnera aphidicola subsp. Acyrthosiphon pisum (strain APS) (Acyrthosiphon pisum symbiotic bacterium).